Consider the following 234-residue polypeptide: (5-formylfuran-3-yl)methyl phosphate synthase (234 aa).

Lysine 27 serves as the catalytic Schiff-base intermediate with substrate. Lysine 85 serves as the catalytic Proton acceptor.

This sequence belongs to the MfnB family.

It carries out the reaction 2 D-glyceraldehyde 3-phosphate = 4-(hydroxymethyl)-2-furancarboxaldehyde phosphate + phosphate + 2 H2O. It functions in the pathway cofactor biosynthesis; methanofuran biosynthesis. Its function is as follows. Catalyzes the formation of 4-(hydroxymethyl)-2-furancarboxaldehyde phosphate (4-HFC-P) from two molecules of glyceraldehyde-3-P (GA-3-P). This chain is (5-formylfuran-3-yl)methyl phosphate synthase, found in Methanosarcina acetivorans (strain ATCC 35395 / DSM 2834 / JCM 12185 / C2A).